A 309-amino-acid chain; its full sequence is UDP-N-acetylenolpyruvoylglucosamine reductase (309 aa).

The region spanning 40-204 (LGGKVPLFAI…LQATFKLKKG (165 aa)) is the FAD-binding PCMH-type domain. Arginine 182 is a catalytic residue. Serine 233 functions as the Proton donor in the catalytic mechanism. Glutamate 304 is an active-site residue.

It belongs to the MurB family. Requires FAD as cofactor.

The protein resides in the cytoplasm. It carries out the reaction UDP-N-acetyl-alpha-D-muramate + NADP(+) = UDP-N-acetyl-3-O-(1-carboxyvinyl)-alpha-D-glucosamine + NADPH + H(+). It participates in cell wall biogenesis; peptidoglycan biosynthesis. Functionally, cell wall formation. The sequence is that of UDP-N-acetylenolpyruvoylglucosamine reductase from Fervidobacterium nodosum (strain ATCC 35602 / DSM 5306 / Rt17-B1).